We begin with the raw amino-acid sequence, 503 residues long: Ell-associated factor Eaf (503 aa).

Polar residues-rich tracts occupy residues 143 to 158 and 170 to 189; these read PGQQ…TNVA and ENST…SRRN. 2 disordered regions span residues 143–223 and 251–503; these read PGQQ…PAWD and NGSQ…EDDD. Ser-199 carries the post-translational modification Phosphoserine. The span at 251 to 264 shows a compositional bias: polar residues; sequence NGSQANTSGSSTGS. Residues 281-296 are compositionally biased toward basic residues; sequence GKQRQAPHHGHAKRQQ. The span at 297–311 shows a compositional bias: polar residues; the sequence is RSSPPMVQQQPNFGR. The span at 312–326 shows a compositional bias: low complexity; the sequence is NSYNGGNNYAQQQQH. Residues 382–397 are compositionally biased toward acidic residues; that stretch reads DSSDSDSGSDSDDSTE. Composition is skewed to low complexity over residues 415 to 435 and 484 to 497; these read MHHQ…QQQH and NDLL…SSNS.

It belongs to the EAF family.

The protein localises to the nucleus. Functionally, promotes transcriptional elongation by Su(Tpl)/ELL. Essential for development. The chain is Ell-associated factor Eaf from Drosophila ananassae (Fruit fly).